The chain runs to 184 residues: ATP synthase subunit delta (184 aa).

It belongs to the ATPase delta chain family. F-type ATPases have 2 components, F(1) - the catalytic core - and F(0) - the membrane proton channel. F(1) has five subunits: alpha(3), beta(3), gamma(1), delta(1), epsilon(1). F(0) has three main subunits: a(1), b(2) and c(10-14). The alpha and beta chains form an alternating ring which encloses part of the gamma chain. F(1) is attached to F(0) by a central stalk formed by the gamma and epsilon chains, while a peripheral stalk is formed by the delta and b chains.

The protein localises to the cell membrane. In terms of biological role, f(1)F(0) ATP synthase produces ATP from ADP in the presence of a proton or sodium gradient. F-type ATPases consist of two structural domains, F(1) containing the extramembraneous catalytic core and F(0) containing the membrane proton channel, linked together by a central stalk and a peripheral stalk. During catalysis, ATP synthesis in the catalytic domain of F(1) is coupled via a rotary mechanism of the central stalk subunits to proton translocation. Functionally, this protein is part of the stalk that links CF(0) to CF(1). It either transmits conformational changes from CF(0) to CF(1) or is implicated in proton conduction. This chain is ATP synthase subunit delta, found in Wolbachia pipientis subsp. Culex pipiens (strain wPip).